A 317-amino-acid polypeptide reads, in one-letter code: Secreted mono- and diacylglycerol lipase 3 (317 aa).

The signal sequence occupies residues 1–29; the sequence is MMFADDLVRMAVLRFITVALAAITNVANA. The cysteines at positions 61 and 310 are disulfide-linked. Asn108 is a glycosylation site (N-linked (GlcNAc...) asparagine). The active-site Nucleophile is Ser175. Asn194 is a glycosylation site (N-linked (GlcNAc...) asparagine). Asp234 is an active-site residue. Asn258 carries an N-linked (GlcNAc...) asparagine glycan. His294 is an active-site residue.

This sequence belongs to the AB hydrolase superfamily. Lipase family. Class 3 subfamily.

The protein localises to the secreted. It carries out the reaction a monoacylglycerol + H2O = glycerol + a fatty acid + H(+). It catalyses the reaction a diacylglycerol + H2O = a monoacylglycerol + a fatty acid + H(+). In terms of biological role, secreted mono- and diacylglycerol lipase involved in plant virulence. Has a substrate preference for p-nitrophenyl esters with a carbon chain length of C10 (p-nitrophenyl caprate). The protein is Secreted mono- and diacylglycerol lipase 3 of Gibberella zeae (strain ATCC MYA-4620 / CBS 123657 / FGSC 9075 / NRRL 31084 / PH-1) (Wheat head blight fungus).